The primary structure comprises 348 residues: Hereditary hemochromatosis protein (348 aa).

The N-terminal stretch at 1-22 (MGPRARPALLLLMLLQTAVLQG) is a signal peptide. The segment at 23 to 114 (RLLRSHSLHY…IMENHNHSKE (92 aa)) is alpha-1. At 23-306 (RLLRSHSLHY…WEPSPSGTLV (284 aa)) the chain is on the extracellular side. 3 N-linked (GlcNAc...) asparagine glycosylation sites follow: Asn110, Asn130, and Asn234. The interval 115–205 (SHTLQVILGC…ELGRGVLDQQ (91 aa)) is alpha-2. 2 cysteine pairs are disulfide-bonded: Cys124-Cys187 and Cys225-Cys282. Positions 206 to 297 (VPPLVKVTHH…GLDQPLIVIW (92 aa)) are alpha-3. The Ig-like C1-type domain occupies 207-298 (PPLVKVTHHV…LDQPLIVIWE (92 aa)). The tract at residues 298–306 (EPSPSGTLV) is connecting peptide. A helical transmembrane segment spans residues 307–330 (IGVISGIAVFVVILFIGILFIILR). The Cytoplasmic portion of the chain corresponds to 331–348 (KRQGSRGAMGHYVLAERE).

The protein belongs to the MHC class I family. As to quaternary structure, binds TFR through the extracellular domain in a pH-dependent manner. Expressed in all tissues tested except brain.

It localises to the cell membrane. Functionally, binds to transferrin receptor (TFR) and reduces its affinity for iron-loaded transferrin. The sequence is that of Hereditary hemochromatosis protein (HFE) from Homo sapiens (Human).